A 247-amino-acid polypeptide reads, in one-letter code: V-type proton ATPase subunit D (247 aa).

This sequence belongs to the V-ATPase D subunit family. In terms of assembly, V-ATPase is a heteromultimeric enzyme made up of two complexes: the ATP-hydrolytic V1 complex and the proton translocation V0 complex. The V1 complex consists of three catalytic AB heterodimers that form a heterohexamer, three peripheral stalks each consisting of EG heterodimers, one central rotor including subunits D and F, and the regulatory subunits C and H. The proton translocation complex V0 consists of the proton transport subunit a, a ring of proteolipid subunits c9c'', rotary subunit d, subunits e and f, and the accessory subunits ATP6AP1/Ac45 and ATP6AP2/PRR. Interacts with SNX10.

The protein resides in the membrane. The protein localises to the cytoplasmic vesicle. Its subcellular location is the clathrin-coated vesicle membrane. It localises to the cytoplasm. It is found in the cytoskeleton. The protein resides in the microtubule organizing center. The protein localises to the centrosome. Its subcellular location is the cell projection. It localises to the cilium. Its function is as follows. Subunit of the V1 complex of vacuolar(H+)-ATPase (V-ATPase), a multisubunit enzyme composed of a peripheral complex (V1) that hydrolyzes ATP and a membrane integral complex (V0) that translocates protons. V-ATPase is responsible for acidifying and maintaining the pH of intracellular compartments and in some cell types, is targeted to the plasma membrane, where it is responsible for acidifying the extracellular environment. May play a role in cilium biogenesis through regulation of the transport and the localization of proteins to the cilium. This Oryctolagus cuniculus (Rabbit) protein is V-type proton ATPase subunit D (ATP6V1D).